A 485-amino-acid polypeptide reads, in one-letter code: Malonate-semialdehyde dehydrogenase (485 aa).

NAD(+) contacts are provided by Phe155, Lys179, Glu182, Arg183, and Ser232. Catalysis depends on Cys287, which acts as the Nucleophile. Glu386 is a binding site for NAD(+).

This sequence belongs to the aldehyde dehydrogenase family. IolA subfamily. Homotetramer.

The enzyme catalyses 3-oxopropanoate + NAD(+) + CoA + H2O = hydrogencarbonate + acetyl-CoA + NADH + H(+). It catalyses the reaction 2-methyl-3-oxopropanoate + NAD(+) + CoA + H2O = propanoyl-CoA + hydrogencarbonate + NADH + H(+). Its pathway is polyol metabolism; myo-inositol degradation into acetyl-CoA; acetyl-CoA from myo-inositol: step 7/7. In terms of biological role, catalyzes the oxidation of malonate semialdehyde (MSA) and methylmalonate semialdehyde (MMSA) into acetyl-CoA and propanoyl-CoA, respectively. Is involved in a myo-inositol catabolic pathway. Bicarbonate, and not CO2, is the end-product of the enzymatic reaction. This chain is Malonate-semialdehyde dehydrogenase, found in Halalkalibacterium halodurans (strain ATCC BAA-125 / DSM 18197 / FERM 7344 / JCM 9153 / C-125) (Bacillus halodurans).